The sequence spans 192 residues: MSIQNEMPGYNEMNQYLNQQGTGLTPAEMHGLISGMICGGNDDSSWLPLLHDLTNEGMAFGHELAQALRKMHSATSDALQDDGFLFQLYLPDGDDVSVFDRADALAGWVNHFLLGLGVTQPKLDKVTGETGEAIDDLRNIAQLGYDEDEDQEELEMSLEEIIEYVRVAALLCHDTFTHPQPTAPEVQKPTLH.

It belongs to the UPF0149 family.

This is UPF0149 protein YgfB from Escherichia coli O127:H6 (strain E2348/69 / EPEC).